The primary structure comprises 151 residues: Small ribosomal subunit protein uS11 (151 aa).

Residue Ser-16 is modified to Phosphoserine. Residues Lys-61, Lys-63, and Lys-106 each participate in a glycyl lysine isopeptide (Lys-Gly) (interchain with G-Cter in SUMO2) cross-link. The disordered stretch occupies residues Asp-131–Leu-151. The residue at position 133 (Thr-133) is a Phosphothreonine. Ser-139 carries the post-translational modification Phosphoserine. The segment covering Arg-142–Leu-151 has biased composition (basic residues).

The protein belongs to the universal ribosomal protein uS11 family. Component of the small ribosomal subunit. Part of the small subunit (SSU) processome, composed of more than 70 proteins and the RNA chaperone small nucleolar RNA (snoRNA) U3.

The protein localises to the cytoplasm. Its subcellular location is the nucleus. It localises to the nucleolus. Functionally, component of the small ribosomal subunit. The ribosome is a large ribonucleoprotein complex responsible for the synthesis of proteins in the cell. Part of the small subunit (SSU) processome, first precursor of the small eukaryotic ribosomal subunit. During the assembly of the SSU processome in the nucleolus, many ribosome biogenesis factors, an RNA chaperone and ribosomal proteins associate with the nascent pre-rRNA and work in concert to generate RNA folding, modifications, rearrangements and cleavage as well as targeted degradation of pre-ribosomal RNA by the RNA exosome. This is Small ribosomal subunit protein uS11 (Rps14) from Mus musculus (Mouse).